A 389-amino-acid polypeptide reads, in one-letter code: 8-amino-7-oxononanoate synthase (389 aa).

R31 contributes to the substrate binding site. Position 109–110 (G109–Y110) interacts with pyridoxal 5'-phosphate. H134 is a substrate binding site. Residues S180, D205 to H208, and T236 to K239 contribute to the pyridoxal 5'-phosphate site. The residue at position 239 (K239) is an N6-(pyridoxal phosphate)lysine. T349 contacts substrate.

The protein belongs to the class-II pyridoxal-phosphate-dependent aminotransferase family. BioF subfamily. As to quaternary structure, homodimer. Pyridoxal 5'-phosphate serves as cofactor.

It catalyses the reaction 6-carboxyhexanoyl-[ACP] + L-alanine + H(+) = (8S)-8-amino-7-oxononanoate + holo-[ACP] + CO2. It participates in cofactor biosynthesis; biotin biosynthesis. Functionally, catalyzes the decarboxylative condensation of pimeloyl-[acyl-carrier protein] and L-alanine to produce 8-amino-7-oxononanoate (AON), [acyl-carrier protein], and carbon dioxide. The sequence is that of 8-amino-7-oxononanoate synthase from Mycobacterium ulcerans (strain Agy99).